The chain runs to 797 residues: Discoidin domain-containing receptor tyrosine kinase B (797 aa).

Residues 1–19 form the signal peptide; that stretch reads MKLLLYLFGVTFHSNTVVA. Residues 20–384 lie on the Extracellular side of the membrane; the sequence is LELRECSHQL…VTEHDDGTSM (365 aa). Positions 25-181 constitute an F5/8 type C domain; the sequence is CSHQLGMSNR…VCMRVEVFGC (157 aa). A disulfide bond links Cys-25 and Cys-181. A disordered region spans residues 46 to 66; it reads SFDLQSTGPQHARAHQESGSG. Asn-141, Asn-167, Asn-264, and Asn-353 each carry an N-linked (GlcNAc...) asparagine glycan. A helical membrane pass occupies residues 385-405; that stretch reads FAFIIFFFMFLIVAVIILTVL. The Cytoplasmic segment spans residues 406-797; sequence YRKREYRVKA…LVHTSPHIHF (392 aa). In terms of domain architecture, Protein kinase spans 527–785; the sequence is LICVSRIGQG…PSFENVHLHL (259 aa). Residues 533-541 and Lys-554 contribute to the ATP site; that span reads IGQGEFGEV. Asp-645 functions as the Proton acceptor in the catalytic mechanism.

The protein belongs to the protein kinase superfamily. Tyr protein kinase family. Insulin receptor subfamily. As to quaternary structure, interacts with shc-1. Post-translationally, autophosphorylated on tyrosine residues. In terms of processing, N-glycosylation at Asn-141 is required for axon regeneration after injury but is dispensable for kinase activity and axon localization. In terms of tissue distribution, expressed in some neurons in head and tail, some motoneurons in ventral nerve cord, in PVP interneurons, seam cells, rectal gland cells, vulva cells and some non-neuronal cells in the tail. Expressed in D-type motor neurons.

The protein resides in the cell membrane. It is found in the cell projection. It localises to the axon. The protein localises to the perikaryon. The catalysed reaction is L-tyrosyl-[protein] + ATP = O-phospho-L-tyrosyl-[protein] + ADP + H(+). Tyrosine-protein kinase receptor which, together with ddr-1, is involved in axon guidance to establish the tracts for the ventral and dorsal nerve cords during nervous system development. Acts upstream of the adapter shc-1, and the tyrosine kinase receptors svh-1 and svh-2 to regulate axon regeneration following injury in D-type motor neurons. May mediate axon regeneration in association with the collagen emb-9. The polypeptide is Discoidin domain-containing receptor tyrosine kinase B (Caenorhabditis elegans).